A 527-amino-acid polypeptide reads, in one-letter code: EGF domain-specific O-linked N-acetylglucosamine transferase (527 aa).

The first 19 residues, 1 to 19 (MLMLLVFGVLLHEVPLSGQ), serve as a signal peptide directing secretion. A Required for optimal activity motif is present at residues 295 to 297 (DYD). An N-linked (GlcNAc...) asparagine glycan is attached at Asn-354. Positions 524 to 527 (HDEL) match the Prevents secretion from ER motif.

It belongs to the glycosyltransferase 61 family.

It is found in the endoplasmic reticulum lumen. It catalyses the reaction L-seryl-[protein] + UDP-N-acetyl-alpha-D-glucosamine = 3-O-(N-acetyl-beta-D-glucosaminyl)-L-seryl-[protein] + UDP + H(+). The enzyme catalyses L-threonyl-[protein] + UDP-N-acetyl-alpha-D-glucosamine = 3-O-(N-acetyl-beta-D-glucosaminyl)-L-threonyl-[protein] + UDP + H(+). Functionally, catalyzes the transfer of a single N-acetylglucosamine from UDP-GlcNAc to a serine or threonine residue in extracellular proteins resulting in their modification with a beta-linked N-acetylglucosamine (O-GlcNAc). Specifically glycosylates the Thr residue located between the fifth and sixth conserved cysteines of folded EGF-like domains. The chain is EGF domain-specific O-linked N-acetylglucosamine transferase (Eogt) from Rattus norvegicus (Rat).